A 136-amino-acid polypeptide reads, in one-letter code: Large ribosomal subunit protein uL16c (136 aa).

This sequence belongs to the universal ribosomal protein uL16 family. Part of the 50S ribosomal subunit.

It localises to the plastid. The protein localises to the chloroplast. The protein is Large ribosomal subunit protein uL16c of Oryza nivara (Indian wild rice).